Here is a 112-residue protein sequence, read N- to C-terminus: UPF0342 protein SSU05_1260 (112 aa).

The protein belongs to the UPF0342 family.

The protein is UPF0342 protein SSU05_1260 of Streptococcus suis (strain 05ZYH33).